The primary structure comprises 265 residues: Hydroxyethylthiazole kinase (265 aa).

Substrate is bound at residue Met43. ATP-binding residues include Lys118 and Thr165. Gly192 lines the substrate pocket.

The protein belongs to the Thz kinase family. Requires Mg(2+) as cofactor.

The catalysed reaction is 5-(2-hydroxyethyl)-4-methylthiazole + ATP = 4-methyl-5-(2-phosphooxyethyl)-thiazole + ADP + H(+). Its pathway is cofactor biosynthesis; thiamine diphosphate biosynthesis; 4-methyl-5-(2-phosphoethyl)-thiazole from 5-(2-hydroxyethyl)-4-methylthiazole: step 1/1. Catalyzes the phosphorylation of the hydroxyl group of 4-methyl-5-beta-hydroxyethylthiazole (THZ). This is Hydroxyethylthiazole kinase from Pyrococcus abyssi (strain GE5 / Orsay).